Reading from the N-terminus, the 495-residue chain is MIEIDGDNLTLEDVYSVSVLHEPVELSTKARNKVAEIHRKFLDLISSGQTIYGVNTGFGGLLNIKISREEEIELQRNLIRSHSAGVGKYLPTDVVRSIMVIRANTLAKGYSAVSTELIDALLAMINKDVVPAVPEFGSVGASGDLAPLAHIGLAMMGEGQAFLNGELMRSDIALSKVGLKPYEFKEKEGVALINGTSMMAGIMALVTSRAYRTIENAVRSSLLSFEALRGTSKAFSDWIVSARPHLGQIAIAEKMRKYLAGSKNVEKSDKEKVQDAYTLRCIPQVYGAVLDTLEYVSSVLVTEINSATDNPLFNGKEVVSGGNFHGEPIALAADFLSIALTDMGNMIERRIARLVDTNLSGLPPFLVKNSGLNSGYMIPQYTAAALCNRNKVLSYPSSADSIPTSANQEDHVSMGSTSTLKLLEIEENLEYIVAIEFLLGAQALEFSQDPISPVTKAIYTKIREYVKPLDKDRPSYLDIEKIREIMNKNELINAA.

Residues 141–143 (ASG) constitute a cross-link (5-imidazolinone (Ala-Gly)). Ser-142 is subject to 2,3-didehydroalanine (Ser).

Belongs to the PAL/histidase family. Post-translationally, contains an active site 4-methylidene-imidazol-5-one (MIO), which is formed autocatalytically by cyclization and dehydration of residues Ala-Ser-Gly.

Its subcellular location is the cytoplasm. It catalyses the reaction L-histidine = trans-urocanate + NH4(+). The protein operates within amino-acid degradation; L-histidine degradation into L-glutamate; N-formimidoyl-L-glutamate from L-histidine: step 1/3. The chain is Probable histidine ammonia-lyase from Thermoplasma volcanium (strain ATCC 51530 / DSM 4299 / JCM 9571 / NBRC 15438 / GSS1).